The primary structure comprises 180 residues: Adenine phosphoribosyltransferase (180 aa).

This sequence belongs to the purine/pyrimidine phosphoribosyltransferase family. In terms of assembly, homodimer.

It is found in the cytoplasm. It catalyses the reaction AMP + diphosphate = 5-phospho-alpha-D-ribose 1-diphosphate + adenine. The protein operates within purine metabolism; AMP biosynthesis via salvage pathway; AMP from adenine: step 1/1. In terms of biological role, catalyzes a salvage reaction resulting in the formation of AMP, that is energically less costly than de novo synthesis. The polypeptide is Adenine phosphoribosyltransferase (Mycolicibacterium smegmatis (strain ATCC 700084 / mc(2)155) (Mycobacterium smegmatis)).